The chain runs to 456 residues: MAARNWSRVWVGGTVILISFIAFSSQIFVIWPWYGREISLDLLMLLVPLNLAAFMIFWNYRLCVITSPGTVPEGWRPNIGAMDGMEVKKGTHTPRYCKNCAHYKPPRAHHCRQCKTCWLKLDHHCPWIGNCVGFYNQGHFIRFLLWVDIGTTFHLIIMVRRVLYIAEYYHEPTLADVLFLVFNFATCVPVWLCVGMFSIYHVYLACGNSTTIEGWEKDKVATLIRRGKIKEVKYPYNIGIYKNIKSVLGPNPLLWLWPQKMQGDGLSFPVNPSAGDHMTQYFWPPQDPSRLPNPPPIPAHASPFVYGNNGFNPNLRPTNSLRARRSSTPRIDEDEYSHEQGRHYSSGDERDNGSISASSSPEPYLSDYDHYDEGPMYPGERMTTLVPRVRRGSEGWEVAPGGGWNAYAGMMDEEVGWDDEAGYDEAPGEDPYVERPWEMRGRYNVYDPEEESGYTH.

Residues 1–9 lie on the Cytoplasmic side of the membrane; it reads MAARNWSRV. Residues 10–30 traverse the membrane as a helical segment; sequence WVGGTVILISFIAFSSQIFVI. The Lumenal segment spans residues 31–37; it reads WPWYGRE. A helical membrane pass occupies residues 38 to 58; sequence ISLDLLMLLVPLNLAAFMIFW. Topologically, residues 59-138 are cytoplasmic; it reads NYRLCVITSP…GNCVGFYNQG (80 aa). The 51-residue stretch at 95-145 folds into the DHHC domain; the sequence is RYCKNCAHYKPPRAHHCRQCKTCWLKLDHHCPWIGNCVGFYNQGHFIRFLL. The active-site S-palmitoyl cysteine intermediate is the Cys-125. A helical membrane pass occupies residues 139 to 159; it reads HFIRFLLWVDIGTTFHLIIMV. Residues 160-176 lie on the Lumenal side of the membrane; that stretch reads RRVLYIAEYYHEPTLAD. The chain crosses the membrane as a helical span at residues 177–197; that stretch reads VLFLVFNFATCVPVWLCVGMF. The Cytoplasmic segment spans residues 198–456; that stretch reads SIYHVYLACG…DPEEESGYTH (259 aa). The interval 284–377 is disordered; it reads PPQDPSRLPN…YDHYDEGPMY (94 aa). The span at 285-298 shows a compositional bias: pro residues; that stretch reads PQDPSRLPNPPPIP. The segment covering 309 to 321 has biased composition (polar residues); that stretch reads NGFNPNLRPTNSL. Over residues 337–352 the composition is skewed to basic and acidic residues; that stretch reads SHEQGRHYSSGDERDN.

Belongs to the DHHC palmitoyltransferase family. PFA4 subfamily.

It is found in the endoplasmic reticulum membrane. It catalyses the reaction L-cysteinyl-[protein] + hexadecanoyl-CoA = S-hexadecanoyl-L-cysteinyl-[protein] + CoA. In terms of biological role, mediates the reversible addition of palmitate to target proteins, thereby regulating their membrane association and biological function. Responsible for the modification of a subset of proteins that are critical in cryptococcal pathogenesis, with substrates involved in cell wall synthesis, signal transduction, and membrane trafficking. Palmitoylates chitin synthase CHS3. The protein is Palmitoyltransferase PFA4 of Cryptococcus neoformans var. grubii serotype A (strain H99 / ATCC 208821 / CBS 10515 / FGSC 9487) (Filobasidiella neoformans var. grubii).